The sequence spans 270 residues: 4-hydroxy-tetrahydrodipicolinate reductase (270 aa).

NAD(+) is bound by residues 11–16 and E37; that span reads GAGGRM. Residue R38 participates in NADP(+) binding. NAD(+)-binding positions include 101-103 and 125-128; these read GTT and APNM. H158 acts as the Proton donor/acceptor in catalysis. Residue H159 coordinates (S)-2,3,4,5-tetrahydrodipicolinate. K162 serves as the catalytic Proton donor. 168–169 contributes to the (S)-2,3,4,5-tetrahydrodipicolinate binding site; sequence GT.

This sequence belongs to the DapB family.

Its subcellular location is the cytoplasm. It catalyses the reaction (S)-2,3,4,5-tetrahydrodipicolinate + NAD(+) + H2O = (2S,4S)-4-hydroxy-2,3,4,5-tetrahydrodipicolinate + NADH + H(+). It carries out the reaction (S)-2,3,4,5-tetrahydrodipicolinate + NADP(+) + H2O = (2S,4S)-4-hydroxy-2,3,4,5-tetrahydrodipicolinate + NADPH + H(+). It functions in the pathway amino-acid biosynthesis; L-lysine biosynthesis via DAP pathway; (S)-tetrahydrodipicolinate from L-aspartate: step 4/4. Its function is as follows. Catalyzes the conversion of 4-hydroxy-tetrahydrodipicolinate (HTPA) to tetrahydrodipicolinate. The chain is 4-hydroxy-tetrahydrodipicolinate reductase from Shewanella sp. (strain MR-4).